The following is a 288-amino-acid chain: Elongation factor Ts (288 aa).

An involved in Mg(2+) ion dislocation from EF-Tu region spans residues 82 to 85 (TDFV).

The protein belongs to the EF-Ts family.

The protein localises to the cytoplasm. Associates with the EF-Tu.GDP complex and induces the exchange of GDP to GTP. It remains bound to the aminoacyl-tRNA.EF-Tu.GTP complex up to the GTP hydrolysis stage on the ribosome. The protein is Elongation factor Ts of Pelodictyon phaeoclathratiforme (strain DSM 5477 / BU-1).